The primary structure comprises 520 residues: GMP synthase [glutamine-hydrolyzing] (520 aa).

Positions 12-205 (KIIVLDYGSQ…AIFICGARGD (194 aa)) constitute a Glutamine amidotransferase type-1 domain. The Nucleophile role is filled by Cys89. Catalysis depends on residues His179 and Glu181. Residues 206–395 (WSMDNFIDMQ…LGMPENIVWR (190 aa)) enclose the GMPS ATP-PPase domain. 233 to 239 (SGGVDSS) is an ATP binding site.

Homodimer.

It carries out the reaction XMP + L-glutamine + ATP + H2O = GMP + L-glutamate + AMP + diphosphate + 2 H(+). Its pathway is purine metabolism; GMP biosynthesis; GMP from XMP (L-Gln route): step 1/1. Functionally, catalyzes the synthesis of GMP from XMP. This is GMP synthase [glutamine-hydrolyzing] from Streptococcus uberis (strain ATCC BAA-854 / 0140J).